The following is a 477-amino-acid chain: Polyketide synthase-related protein Dhc1 (477 aa).

A Carrier domain is found at 34-112 (EKMTVREGEL…AMTHCVFDRA (79 aa)). Serine 72 is modified (O-(pantetheine 4'-phosphoryl)serine). Residues 161-322 (LTGATSFLGS…AGEVFLENLV (162 aa)) form a ketoreductase (KR) domain region. The disordered stretch occupies residues 410–435 (VQQQQQQQQRQSQPPRDDAADGSPTE). Positions 411-422 (QQQQQQQQRQSQ) are enriched in low complexity. The span at 424 to 435 (PRDDAADGSPTE) shows a compositional bias: basic and acidic residues.

It functions in the pathway mycotoxin biosynthesis. Its function is as follows. Polyketide synthase-related protein; part of the gene cluster that mediates the biosynthesis of 10,11-dehydrocurvularin, a prevalent fungal phytotoxin with heat shock response and immune-modulatory activities. The highly reducing polyketide synthase Dhc3 is responsible for biosynthesis up to the tetraketide stage. The non-reducing polyketide synthase Dhc5 then conducts four additional chain extension cycles, producing the unreduced part of the nascent octaketide from C-1 to C-8 in 10,11-dehydrocurvularin. The role of Dhc1 in 10,11-dehydrocurvularin biosynthesis has not been identified yet. The polypeptide is Polyketide synthase-related protein Dhc1 (Alternaria cinerariae).